The primary structure comprises 547 residues: Vacuolar fusion protein MON1 homolog B (547 aa).

M1 bears the N-acetylmethionine mark. Residues 1–15 (MEVGGDTAAPAPGGA) show a composition bias toward low complexity. Residues 1–106 (MEVGGDTAAP…GGDPSDEEWR (106 aa)) are disordered. Residues S59 and S61 each carry the phosphoserine modification.

Belongs to the MON1/SAND family. Interacts with CCNT2; down-regulates CCNT2-mediated activation of viral promoters during herpes simplex virus 1/HHV-1 infection. Found in a complex with RMC1, CCZ1 MON1A and MON1B.

This is Vacuolar fusion protein MON1 homolog B (MON1B) from Homo sapiens (Human).